The following is a 220-amino-acid chain: MKTGALTTFLALCLPVTVFATTLRLSNEVDLLVLDGKKVSSSLLRGAESIELENGPHQLVFRVEKTIRLPGNEERLYISPPLVISFDTQLISQVNFQLPRLENEREASHFNAAPRLALLDGDAMPIPVKLDILAITSTAKVVDYEIETERYNKSAKRASLPQFATMMADDSTLLSDVSELDTVPPQSQTLTEQRLKYWFRLADPQTRHHFLQWAEKQPPS.

Residues 1–20 form the signal peptide; the sequence is MKTGALTTFLALCLPVTVFA.

This sequence belongs to the UPF0319 family.

The sequence is that of UPF0319 protein YccT from Salmonella choleraesuis (strain SC-B67).